The following is a 359-amino-acid chain: Archaemetzincin-2 (359 aa).

His-254 lines the Zn(2+) pocket. The Proton acceptor role is filled by Glu-255. Residues His-258, His-264, Cys-265, Cys-270, Cys-289, and Cys-292 each contribute to the Zn(2+) site.

It belongs to the peptidase M54 family. Zn(2+) is required as a cofactor. Predominantly expressed in testis.

Its function is as follows. Probable zinc metalloprotease. The polypeptide is Archaemetzincin-2 (Amz2) (Mus musculus (Mouse)).